The chain runs to 1219 residues: Polyamine-transporting ATPase 13A3 (1219 aa).

Topologically, residues 1–28 (MDKEERKTINKGQEDEMEIHGYNLCRWK) are cytoplasmic. An intramembrane segment occupies 29-49 (LAMVFVGVICTGGFLLLLLYW). Over 50-201 (LPEWRVKATC…IAVKVPSVFK (152 aa)) the chain is Cytoplasmic. Residues 202–222 (LLIKEVLNPFYIFQLFSVILW) traverse the membrane as a helical segment. Residues 223-228 (SVDEYY) lie on the Lumenal side of the membrane. Residues 229–249 (YYALAIVIMSVVSIISSLYSI) traverse the membrane as a helical segment. The Cytoplasmic segment spans residues 250–405 (RKQYVMLHDM…KPTDFKLYRD (156 aa)). Residues 406–426 (AYLFLLCLVVVAGIGFIYTII) form a helical membrane-spanning segment. At 427–444 (NSILNEKEVQEIIIKSLD) the chain is on the lumenal side. The helical transmembrane segment at 445–465 (IITITVPPALPAAMTAGIVYA) threads the bilayer. Over 466 to 936 (QRRLKKVGIF…ALMTSFCVFK (471 aa)) the chain is Cytoplasmic. The 4-aspartylphosphate intermediate role is filled by D494. Mg(2+) is bound by residues D494 and T496. Residues 494–496 (DKT), F624, R680, and D746 contribute to the ATP site. At S813 the chain carries Phosphoserine. Residues D879 and D883 each coordinate Mg(2+). ATP is bound at residue 879–883 (DGAND). A helical membrane pass occupies residues 937–957 (FMALYSIIQYFSVTLLYSILS). A topological domain (lumenal) is located at residue N958. The helical transmembrane segment at 959–979 (LGDFQFLFIDLAIILVVVFTM) threads the bilayer. Over 980-995 (SLNPAWKELVAQRPPS) the chain is Cytoplasmic. Residues 996–1016 (GLISGALLFSVLSQIVISVGF) form a helical membrane-spanning segment. Residues 1017 to 1066 (QSLGFFWVKQYKVCDPNSDVCNTTRSACWNSSHLYNGTELDSCKIQNYEN) lie on the Lumenal side of the membrane. Residues 1067-1087 (TTVFFISSFQYLTVAVAFSKG) traverse the membrane as a helical segment. Residues 1088-1098 (KPFRQPCYKNY) lie on the Cytoplasmic side of the membrane. Residues 1099 to 1119 (FFVISVIILYVFILFIMLHPV) traverse the membrane as a helical segment. Topologically, residues 1120–1136 (ASVDQVLEIMCVPYQWR) are lumenal. Residues 1137–1157 (IYMLIIVLINAFVSITVEESV) traverse the membrane as a helical segment. Topologically, residues 1158-1219 (DRWGKCCLSW…NGSCQIITIA (62 aa)) are cytoplasmic.

It belongs to the cation transport ATPase (P-type) (TC 3.A.3) family. Type V subfamily. As to expression, expression is greatest in liver, followed by kidney, colon, stomach, brain and small intestine. Isoform 1 is highly expressed in the kidney while isoform 2 is highly expressed in the brain.

It localises to the recycling endosome membrane. It is found in the early endosome membrane. Its subcellular location is the late endosome membrane. It catalyses the reaction putrescine(out) + ATP + H2O = putrescine(in) + ADP + phosphate + H(+). Functionally, ATP-driven pump involved in endocytosis-dependent polyamine transport. Uses ATP as an energy source to transfer polyamine precursor putrescine from the endosomal compartment to the cytosol. This is Polyamine-transporting ATPase 13A3 from Mus musculus (Mouse).